The following is a 126-amino-acid chain: Small ribosomal subunit protein uS12 (126 aa).

Residues 1–28 form a disordered region; it reads MPTINQLVRKGRQSETTKSKSPALQDCP. Residue Asp89 is modified to 3-methylthioaspartic acid. A disordered region spans residues 103–126; the sequence is DTQGVKDRKQARSKYGAKRAKAGK. Residues 113–126 show a composition bias toward basic residues; the sequence is ARSKYGAKRAKAGK.

The protein belongs to the universal ribosomal protein uS12 family. As to quaternary structure, part of the 30S ribosomal subunit. Contacts proteins S8 and S17. May interact with IF1 in the 30S initiation complex.

Its function is as follows. With S4 and S5 plays an important role in translational accuracy. Functionally, interacts with and stabilizes bases of the 16S rRNA that are involved in tRNA selection in the A site and with the mRNA backbone. Located at the interface of the 30S and 50S subunits, it traverses the body of the 30S subunit contacting proteins on the other side and probably holding the rRNA structure together. The combined cluster of proteins S8, S12 and S17 appears to hold together the shoulder and platform of the 30S subunit. The chain is Small ribosomal subunit protein uS12 from Paraburkholderia phytofirmans (strain DSM 17436 / LMG 22146 / PsJN) (Burkholderia phytofirmans).